A 1283-amino-acid polypeptide reads, in one-letter code: Bifunctional dioxygenase (DOX)-epoxy alcohol synthase (EAS) (1283 aa).

The interval 1-64 (MAEHKNGVAT…LPKEMGDGSY (64 aa)) is disordered. Residues 130–476 (TNSFISQLWN…DGKFNDDELV (347 aa)) are fatty acid alpha-dioxygenase. H227 lines the heme b pocket. Residue Y405 is part of the active site. H408 serves as a coordination point for heme b. Positions 684 to 1108 (INIIGYNAAK…WDDGCGTDLF (425 aa)) are epoxy alcohol synthase. C1035 serves as a coordination point for heme.

The protein in the N-terminal section; belongs to the peroxidase family. This sequence in the C-terminal section; belongs to the cytochrome P450 family. In terms of assembly, homotetramer. Heme b is required as a cofactor. It depends on heme as a cofactor.

It carries out the reaction (9Z,12Z)-octadecadienoate + O2 = (8E,10R,12Z)-10-hydroperoxyoctadeca-8,12-dienoate. The enzyme catalyses (8E,10R,12Z)-10-hydroperoxyoctadeca-8,12-dienoate = (12S,13R)-epoxy-(10R)-hydroxy-(8E)-octadecenoate. The catalysed reaction is (9Z)-octadecenoate + O2 = (8R)-hydroperoxy-(9Z)-octadecenoate. Its function is as follows. Bifunctional dioxygenase (DOX)-epoxy alcohol synthase (EAS) that converts linoleic acid (18:2n-6) sequentially to 10(R)-hydroperoxy-8(E),12(Z)-octadecadienoic acid (10R-HPODE) and 10R-HPODE further to 12(13)-epoxy-10-hydroxy-8(E)-octa-decenoic acid as the end product. Linoleic acid is oxidized mainly to the R stereoisomer of 10-HPODE. The dioxygenase domain is also able to oygenate position C-8 of linoleic acid to produce 8(R)-hydroperoxy-8(E),12(Z)-octadecadienoic acid (8R-HPODE). This Fusarium oxysporum (strain Fo5176) (Fusarium vascular wilt) protein is Bifunctional dioxygenase (DOX)-epoxy alcohol synthase (EAS).